The following is an 854-amino-acid chain: MALRLVADFDLGKDVLPWLRAQRAVSEASGAGSGGADVLENDYESLHVLNVERNGNIIYTYKDDKGNVVFGLYDCQTRQNELLYTFEKDLQVFSCSVNSERTLLAASLVQSTKEGKRNELQPGSKCLTLLVEIHPVNNVKVLKAVDSYIWVQFLYPHIESHPLPENHLLLISEEKYIEQFRIHVAQEDGNRVVIKNSGHLPRDRIAEDFVWAQWDMSEQRLYYIDLKKSRSILKCIQFYADESYNLMFEVPLDISLSNSGFKLVNFGCDYHQYRDKFSKHLTLCVFTNHTGSLCVCYSPKCASWGQITYSVFYIHKGHSKTFTTSLENVGSHMTKGITFLNLDYYVAVYLPGHFFHLLNVQHPDLICHNLFLTGNNEMIDMLPHCPLQSLSGSLVLDCCSGKLYRALLSQSSLLQLLQNTCLDCEKMAALHCALYCGQGAQFLEAQIIQWISENVSACHSFDLIQEFIIASSYWSVYSETSNMDKLLPHSSVLTWNTEIPGITLVTEDIALPLMKVLSFKGYWEKLNSNLEYVKYAKPHFHYNNSVVRREWHNLISEEKTGKRRSAAYVRNILDNAVKVISNLEARNLGPRLTPLLQEEDSHQRLLMGLMVSELKDHFLRHLQGVEKKKIEQMVLDYISKLLDLICHIVETNWRKHNLHSWVLHFNSRGSAAEFAVFHIMTRILEATNSLFLPLPPGFHTLHTILGVQCLPLHNLLHCIDSGVLLLTETAVIRLMKDLDNTEKNEKLKFSIIVRLPPLIGQKICRLWDHPMSSNIISRNHVTRLLQNYKKQPRNSMINKSSFSVEFLPLNYFIEILTDIESSNQALYPFEGHDNVDAEFVEEAALKHTAMLLGL.

This sequence belongs to the GSAP family. In terms of assembly, interacts with APP; specifically interacts with the CTF-alpha product of APP. Interacts with the gamma-secretase complex. In terms of processing, the protein is first synthesized as a holoprotein form of 98 kDa and rapidly processed into the gamma-secretase-activating protein 16 kDa C-terminal form, which constitutes the predominant form. As to expression, widely expressed.

Its subcellular location is the golgi apparatus. The protein resides in the trans-Golgi network. Functionally, regulator of gamma-secretase activity, which specifically activates the production of amyloid-beta protein (amyloid-beta protein 40 and amyloid-beta protein 42), without affecting the cleavage of other gamma-secretase targets such has Notch. The gamma-secretase complex is an endoprotease complex that catalyzes the intramembrane cleavage of integral membrane proteins such as Notch receptors and APP (amyloid-beta precursor protein). Specifically promotes the gamma-cleavage of APP CTF-alpha (also named APP-CTF) by the gamma-secretase complex to generate amyloid-beta, while it reduces the epsilon-cleavage of APP CTF-alpha, leading to a low production of AICD. This chain is Gamma-secretase-activating protein (GSAP), found in Homo sapiens (Human).